The primary structure comprises 278 residues: Manganese import system permease protein ScaB (278 aa).

A run of 8 helical transmembrane segments spans residues 18 to 38 (ALITAIAIGIVAGAVGCFIIL), 40 to 60 (GMSLMGDAISHAVLPGVALSF), 61 to 81 (ILGINFFIGAIAFGLLASILI), 136 to 156 (VTIGVGVAVLLVIVLLFRPLL), 172 to 192 (VKLYHYLLMVLLTLVSVTAMQ), 194 to 214 (VGTILIAAMLITPAATAYLYA), 220 to 240 (MMLLSSGLGALASILGLFIGY), and 244 to 264 (IAVGSCIVLTSAIFFLISFFI).

It belongs to the ABC-3 integral membrane protein family.

It localises to the cell membrane. In terms of biological role, part of an ABC transporter complex involved in manganese import. This Streptococcus pneumoniae protein is Manganese import system permease protein ScaB.